The following is a 295-amino-acid chain: Tyrosine recombinase XerD (295 aa).

In terms of domain architecture, Core-binding (CB) spans 1–85 (MNTIIEEYLN…TIRSFHQFAL (85 aa)). The 184-residue stretch at 106-289 (KLPDVLEIDE…SKSQIRKMYT (184 aa)) folds into the Tyr recombinase domain. Active-site residues include Arg146, Lys170, His241, Arg244, and His267. Catalysis depends on Tyr276, which acts as the O-(3'-phospho-DNA)-tyrosine intermediate.

Belongs to the 'phage' integrase family. XerD subfamily. As to quaternary structure, forms a cyclic heterotetrameric complex composed of two molecules of XerC and two molecules of XerD.

The protein resides in the cytoplasm. Site-specific tyrosine recombinase, which acts by catalyzing the cutting and rejoining of the recombining DNA molecules. The XerC-XerD complex is essential to convert dimers of the bacterial chromosome into monomers to permit their segregation at cell division. It also contributes to the segregational stability of plasmids. The sequence is that of Tyrosine recombinase XerD from Staphylococcus epidermidis (strain ATCC 12228 / FDA PCI 1200).